A 376-amino-acid polypeptide reads, in one-letter code: Chaperone protein DnaJ (376 aa).

Residues 5–69 (DYYEVLGISK…QKRAQYDQYG (65 aa)) enclose the J domain. The CR-type zinc finger occupies 133-215 (GKDAEIEIPR…CHGKGRVTKT (83 aa)). The Zn(2+) site is built by Cys146, Cys149, Cys163, Cys166, Cys189, Cys192, Cys203, and Cys206. 4 CXXCXGXG motif repeats span residues 146–153 (CDTCHGSG), 163–170 (CSHCGGKG), 189–196 (CQYCNGTG), and 203–210 (CSTCHGKG).

The protein belongs to the DnaJ family. In terms of assembly, homodimer. Zn(2+) is required as a cofactor.

Its subcellular location is the cytoplasm. Functionally, participates actively in the response to hyperosmotic and heat shock by preventing the aggregation of stress-denatured proteins and by disaggregating proteins, also in an autonomous, DnaK-independent fashion. Unfolded proteins bind initially to DnaJ; upon interaction with the DnaJ-bound protein, DnaK hydrolyzes its bound ATP, resulting in the formation of a stable complex. GrpE releases ADP from DnaK; ATP binding to DnaK triggers the release of the substrate protein, thus completing the reaction cycle. Several rounds of ATP-dependent interactions between DnaJ, DnaK and GrpE are required for fully efficient folding. Also involved, together with DnaK and GrpE, in the DNA replication of plasmids through activation of initiation proteins. This Listeria welshimeri serovar 6b (strain ATCC 35897 / DSM 20650 / CCUG 15529 / CIP 8149 / NCTC 11857 / SLCC 5334 / V8) protein is Chaperone protein DnaJ.